Here is a 439-residue protein sequence, read N- to C-terminus: Tubulin beta chain (439 aa).

The GTP site is built by Gln-11, Glu-69, Ser-138, Gly-142, Thr-143, Gly-144, Asn-204, and Asn-226. Glu-69 provides a ligand contact to Mg(2+).

This sequence belongs to the tubulin family. As to quaternary structure, dimer of alpha and beta chains. A typical microtubule is a hollow water-filled tube with an outer diameter of 25 nm and an inner diameter of 15 nM. Alpha-beta heterodimers associate head-to-tail to form protofilaments running lengthwise along the microtubule wall with the beta-tubulin subunit facing the microtubule plus end conferring a structural polarity. Microtubules usually have 13 protofilaments but different protofilament numbers can be found in some organisms and specialized cells. Mg(2+) serves as cofactor.

Its subcellular location is the cytoplasm. It is found in the cytoskeleton. Its function is as follows. Tubulin is the major constituent of microtubules, a cylinder consisting of laterally associated linear protofilaments composed of alpha- and beta-tubulin heterodimers. Microtubules grow by the addition of GTP-tubulin dimers to the microtubule end, where a stabilizing cap forms. Below the cap, tubulin dimers are in GDP-bound state, owing to GTPase activity of alpha-tubulin. This Encephalitozoon cuniculi (strain GB-M1) (Microsporidian parasite) protein is Tubulin beta chain (TUB2).